Consider the following 2763-residue polypeptide: Large tegument protein deneddylase (2763 aa).

The deubiquitination activity stretch occupies residues 1-247 (MDIIPPIAVT…CDTYFTDEQY (247 aa)). The region spanning 12–237 (AGVGSRNQFD…SSAVTLIYGS (226 aa)) is the Peptidase C76 domain. Catalysis depends on residues C32, D168, and H170. The interval 495–523 (LELFINLTILRLTGFVVENGTRTHHGATS) is interaction with inner tegument protein. A disordered region spans residues 2456 to 2476 (VRPAQPAQPAQPAQPAQTVQP). 5 tandem repeats follow at residues 2458–2460 (PAQ), 2461–2463 (PAQ), 2464–2466 (PAQ), 2467–2469 (PAQ), and 2470–2472 (PAQ). The interval 2458–2472 (PAQPAQPAQPAQPAQ) is 5 X 3 AA repeats of P-A-Q. Residues 2459 to 2476 (AQPAQPAQPAQPAQTVQP) are compositionally biased toward low complexity.

The protein belongs to the herpesviridae large tegument protein family. Interacts with host CUL1 and CUL4A; these interactions inhibit the E3 ligase activity of cullins. Interacts with inner tegument protein. Interacts with capsid vertex specific component CVC2. Interacts with the major capsid protein/MCP.

The protein resides in the virion tegument. Its subcellular location is the host cytoplasm. It is found in the host nucleus. The enzyme catalyses Thiol-dependent hydrolysis of ester, thioester, amide, peptide and isopeptide bonds formed by the C-terminal Gly of ubiquitin (a 76-residue protein attached to proteins as an intracellular targeting signal).. Large tegument protein that plays multiple roles in the viral cycle. During viral entry, remains associated with the capsid while most of the tegument is detached and participates in the capsid transport toward the host nucleus. Plays a role in the routing of the capsid at the nuclear pore complex and subsequent uncoating. Within the host nucleus, acts as a deneddylase and promotes the degradation of nuclear CRLs (cullin-RING ubiquitin ligases) and thereby stabilizes nuclear CRL substrates, while cytoplasmic CRLs remain unaffected. These modifications prevent host cell cycle S-phase progression and create a favorable environment allowing efficient viral genome replication. Participates later in the secondary envelopment of capsids. Indeed, plays a linker role for the association of the outer viral tegument to the capsids together with the inner tegument protein. The sequence is that of Large tegument protein deneddylase from Homo sapiens (Human).